The primary structure comprises 337 residues: Holliday junction branch migration complex subunit RuvB (337 aa).

The segment at Ala-4–Tyr-186 is large ATPase domain (RuvB-L). Residues Arg-26, Gly-67, Lys-70, Thr-71, Thr-72, Glu-133 to Tyr-135, Arg-176, Tyr-186, and Arg-223 contribute to the ATP site. Thr-71 lines the Mg(2+) pocket. Positions Asn-187–Asp-257 are small ATPAse domain (RuvB-S). A head domain (RuvB-H) region spans residues Ala-260 to Ala-337. Residues Arg-296, Arg-315, and Arg-320 each coordinate DNA.

It belongs to the RuvB family. As to quaternary structure, homohexamer. Forms an RuvA(8)-RuvB(12)-Holliday junction (HJ) complex. HJ DNA is sandwiched between 2 RuvA tetramers; dsDNA enters through RuvA and exits via RuvB. An RuvB hexamer assembles on each DNA strand where it exits the tetramer. Each RuvB hexamer is contacted by two RuvA subunits (via domain III) on 2 adjacent RuvB subunits; this complex drives branch migration. In the full resolvosome a probable DNA-RuvA(4)-RuvB(12)-RuvC(2) complex forms which resolves the HJ.

Its subcellular location is the cytoplasm. The enzyme catalyses ATP + H2O = ADP + phosphate + H(+). Its function is as follows. The RuvA-RuvB-RuvC complex processes Holliday junction (HJ) DNA during genetic recombination and DNA repair, while the RuvA-RuvB complex plays an important role in the rescue of blocked DNA replication forks via replication fork reversal (RFR). RuvA specifically binds to HJ cruciform DNA, conferring on it an open structure. The RuvB hexamer acts as an ATP-dependent pump, pulling dsDNA into and through the RuvAB complex. RuvB forms 2 homohexamers on either side of HJ DNA bound by 1 or 2 RuvA tetramers; 4 subunits per hexamer contact DNA at a time. Coordinated motions by a converter formed by DNA-disengaged RuvB subunits stimulates ATP hydrolysis and nucleotide exchange. Immobilization of the converter enables RuvB to convert the ATP-contained energy into a lever motion, pulling 2 nucleotides of DNA out of the RuvA tetramer per ATP hydrolyzed, thus driving DNA branch migration. The RuvB motors rotate together with the DNA substrate, which together with the progressing nucleotide cycle form the mechanistic basis for DNA recombination by continuous HJ branch migration. Branch migration allows RuvC to scan DNA until it finds its consensus sequence, where it cleaves and resolves cruciform DNA. The polypeptide is Holliday junction branch migration complex subunit RuvB (Shewanella halifaxensis (strain HAW-EB4)).